The chain runs to 380 residues: Cystathionine beta-lyase (380 aa).

K196 is modified (N6-(pyridoxal phosphate)lysine).

It belongs to the trans-sulfuration enzymes family. Pyridoxal 5'-phosphate is required as a cofactor.

Its subcellular location is the cytoplasm. It catalyses the reaction L,L-cystathionine + H2O = L-homocysteine + pyruvate + NH4(+). It carries out the reaction an S-substituted L-cysteine + H2O = a thiol + pyruvate + NH4(+). Its pathway is amino-acid biosynthesis; L-methionine biosynthesis via de novo pathway; L-homocysteine from L-cystathionine: step 1/1. The enzymatic degradation of amino acids in cheese is believed to generate aroma compounds and therefore to be essential for flavor development. Cystathionine beta-lyase (CBL) can convert cystathionine to homocysteine but is also able to catalyze an alpha, gamma elimination. With methionine as a substrate, it produces volatile sulfur compounds which are important for flavor formation in Gouda cheese. This is Cystathionine beta-lyase (metC) from Lactococcus lactis subsp. lactis (strain IL1403) (Streptococcus lactis).